Reading from the N-terminus, the 214-residue chain is Sugar fermentation stimulation protein homolog (214 aa).

This sequence belongs to the SfsA family.

The sequence is that of Sugar fermentation stimulation protein homolog from Aquifex aeolicus (strain VF5).